We begin with the raw amino-acid sequence, 154 residues long: uncharacterized protein (154 aa).

A mitochondrion-targeting transit peptide spans 1–42 (MLRVIWKHSSRVTRSIELSNISTTNHTRSLRRLSWISPRRFY).

The protein resides in the mitochondrion. This is an uncharacterized protein from Saccharomyces cerevisiae (strain ATCC 204508 / S288c) (Baker's yeast).